We begin with the raw amino-acid sequence, 101 residues long: Small ribosomal subunit protein uS14 (101 aa).

This sequence belongs to the universal ribosomal protein uS14 family. In terms of assembly, part of the 30S ribosomal subunit. Contacts proteins S3 and S10.

In terms of biological role, binds 16S rRNA, required for the assembly of 30S particles and may also be responsible for determining the conformation of the 16S rRNA at the A site. The sequence is that of Small ribosomal subunit protein uS14 from Maricaulis maris (strain MCS10) (Caulobacter maris).